Here is a 360-residue protein sequence, read N- to C-terminus: MSLTRLNIEAFRNIQFAQLIPAPGINVIYGQNGSGKTSILEAIYFLGMGRSFRSHLSQRVINNDNDKLTLFATLNLARGDSKIGLRRFRSGETEVKIDGEKVKRLSTLAETLPIQVITPESFSLLFEGPKSRRQFIDWGAFHADPQFYGAWTNVRRVIKQRNQLLRNGAVYTHIQFWDQEFVRYAEQVTEIRNHYVDSLNGLLKGIIGEFLPSVDVKVSFTRGWDSKTDFAELLENQYSRDLATGHTVSGPHKADLRLRVGNLPAQDALSRGQLKLLVCALRIAQGKLLKQQIDKHSIYLVDDLPSELDAQHRQLLLKQLTDTGAQVFVTAIDPAAIVDSLHTPPNRMFHVEQGRVTVVE.

30-37 (GQNGSGKT) is an ATP binding site.

This sequence belongs to the RecF family.

The protein resides in the cytoplasm. Its function is as follows. The RecF protein is involved in DNA metabolism; it is required for DNA replication and normal SOS inducibility. RecF binds preferentially to single-stranded, linear DNA. It also seems to bind ATP. This Shewanella putrefaciens (strain CN-32 / ATCC BAA-453) protein is DNA replication and repair protein RecF.